The primary structure comprises 511 residues: Bifunctional purine biosynthesis protein PurH (511 aa).

Positions 1–145 constitute an MGS-like domain; that stretch reads MKRRALVSVS…KNHQHVTVVV (145 aa).

Belongs to the PurH family.

The catalysed reaction is (6R)-10-formyltetrahydrofolate + 5-amino-1-(5-phospho-beta-D-ribosyl)imidazole-4-carboxamide = 5-formamido-1-(5-phospho-D-ribosyl)imidazole-4-carboxamide + (6S)-5,6,7,8-tetrahydrofolate. It carries out the reaction IMP + H2O = 5-formamido-1-(5-phospho-D-ribosyl)imidazole-4-carboxamide. It participates in purine metabolism; IMP biosynthesis via de novo pathway; 5-formamido-1-(5-phospho-D-ribosyl)imidazole-4-carboxamide from 5-amino-1-(5-phospho-D-ribosyl)imidazole-4-carboxamide (10-formyl THF route): step 1/1. The protein operates within purine metabolism; IMP biosynthesis via de novo pathway; IMP from 5-formamido-1-(5-phospho-D-ribosyl)imidazole-4-carboxamide: step 1/1. This is Bifunctional purine biosynthesis protein PurH from Halalkalibacterium halodurans (strain ATCC BAA-125 / DSM 18197 / FERM 7344 / JCM 9153 / C-125) (Bacillus halodurans).